The chain runs to 94 residues: Integration host factor subunit beta (94 aa).

The protein belongs to the bacterial histone-like protein family. As to quaternary structure, heterodimer of an alpha and a beta chain.

Functionally, this protein is one of the two subunits of integration host factor, a specific DNA-binding protein that functions in genetic recombination as well as in transcriptional and translational control. The protein is Integration host factor subunit beta (ihfB) of Haemophilus influenzae (strain ATCC 51907 / DSM 11121 / KW20 / Rd).